The following is a 193-amino-acid chain: Ion-translocating oxidoreductase complex subunit A (193 aa).

6 helical membrane-spanning segments follow: residues 4–24 (LALILVSTVLVNNFVLVKFLG), 38–58 (AMGMALATTFVLTLSAVCSYL), 65–85 (APLGVEYLRTITFIMVIAVVV), 102–122 (VLGIYLPLITTNCAVLGVALL), 134–154 (AVYGFGAAAGFSLVLVLFAAL), and 171–191 (SVALVTAGILSMGFMGFAGLV).

It belongs to the NqrDE/RnfAE family. In terms of assembly, the complex is composed of six subunits: RnfA, RnfB, RnfC, RnfD, RnfE and RnfG.

It localises to the cell inner membrane. Functionally, part of a membrane-bound complex that couples electron transfer with translocation of ions across the membrane. This is Ion-translocating oxidoreductase complex subunit A from Alkalilimnicola ehrlichii (strain ATCC BAA-1101 / DSM 17681 / MLHE-1).